A 433-amino-acid chain; its full sequence is N-lysine methyltransferase SMYD2 (433 aa).

The SET domain maps to 7 to 241 (GGLERFCSPG…PGEEVFTSYI (235 aa)). Residue 17–19 (KGR) participates in S-adenosyl-L-methionine binding. Zn(2+) is bound by residues cysteine 52, cysteine 55, cysteine 65, cysteine 68, cysteine 74, cysteine 78, histidine 86, and cysteine 90. An MYND-type zinc finger spans residues 52 to 90 (CEYCFTRKEGLSKCGRCKQAFYCNVECQKEDWPMHKLEC). S-adenosyl-L-methionine contacts are provided by residues histidine 137, 206-207 (NH), and 258-260 (YFF). Serine 283 is subject to Phosphoserine.

Belongs to the class V-like SAM-binding methyltransferase superfamily. Interacts with RNA polymerase II and HELZ. Interacts with SIN3A and HDAC1. Interacts (via MYND-type zinc finger) with EPB41L3. Interacts (via SET domain) with p53/TP53. Interacts with RB1 and HSP90AA1.

The protein resides in the cytoplasm. It is found in the cytosol. It localises to the nucleus. It catalyses the reaction L-lysyl(4)-[histone H3] + 3 S-adenosyl-L-methionine = N(6),N(6),N(6)-trimethyl-L-lysyl(4)-[histone H3] + 3 S-adenosyl-L-homocysteine + 3 H(+). The enzyme catalyses L-lysyl-[protein] + S-adenosyl-L-methionine = N(6)-methyl-L-lysyl-[protein] + S-adenosyl-L-homocysteine + H(+). Functionally, protein-lysine N-methyltransferase that methylates both histones and non-histone proteins, including p53/TP53 and RB1. Specifically trimethylates histone H3 'Lys-4' (H3K4me3) in vivo. The activity requires interaction with HSP90alpha. Shows even higher methyltransferase activity on p53/TP53. Monomethylates 'Lys-370' of p53/TP53, leading to decreased DNA-binding activity and subsequent transcriptional regulation activity of p53/TP53. Monomethylates RB1 at 'Lys-860'. The chain is N-lysine methyltransferase SMYD2 (SMYD2) from Homo sapiens (Human).